The chain runs to 189 residues: Adenylate kinase (189 aa).

Residue 11 to 16 (GSGKGT) participates in ATP binding. The tract at residues 31-60 (STGDVLRAEIKNGTELGKTAKGYIDQGQLI) is NMP. AMP contacts are provided by residues threonine 32, arginine 37, 58–60 (QLI), 86–89 (GFPR), and glutamine 93. Residues 127-137 (KRGKDSGRADD) are LID. Position 128 (arginine 128) interacts with ATP. Arginine 134 and arginine 145 together coordinate AMP. Position 173 (glycine 173) interacts with ATP.

It belongs to the adenylate kinase family. As to quaternary structure, monomer.

The protein localises to the cytoplasm. The catalysed reaction is AMP + ATP = 2 ADP. Its pathway is purine metabolism; AMP biosynthesis via salvage pathway; AMP from ADP: step 1/1. In terms of biological role, catalyzes the reversible transfer of the terminal phosphate group between ATP and AMP. Plays an important role in cellular energy homeostasis and in adenine nucleotide metabolism. This chain is Adenylate kinase, found in Bacteroides thetaiotaomicron (strain ATCC 29148 / DSM 2079 / JCM 5827 / CCUG 10774 / NCTC 10582 / VPI-5482 / E50).